The primary structure comprises 120 residues: Large ribosomal subunit protein eL8 (120 aa).

This sequence belongs to the eukaryotic ribosomal protein eL8 family. As to quaternary structure, part of the 50S ribosomal subunit. Probably part of the RNase P complex.

Its subcellular location is the cytoplasm. Its function is as follows. Multifunctional RNA-binding protein that recognizes the K-turn motif in ribosomal RNA, the RNA component of RNase P, box H/ACA, box C/D and box C'/D' sRNAs. This Methanosarcina mazei (strain ATCC BAA-159 / DSM 3647 / Goe1 / Go1 / JCM 11833 / OCM 88) (Methanosarcina frisia) protein is Large ribosomal subunit protein eL8.